A 388-amino-acid polypeptide reads, in one-letter code: Succinate--CoA ligase [ADP-forming] subunit beta (388 aa).

One can recognise an ATP-grasp domain in the interval 9 to 244 (KQLFARSGLP…QSQEDPREAQ (236 aa)). ATP is bound by residues lysine 46, 53–55 (GRG), glutamate 99, threonine 102, and glutamate 107. Mg(2+) is bound by residues asparagine 199 and aspartate 213. Residues asparagine 264 and 321-323 (GIV) contribute to the substrate site.

Belongs to the succinate/malate CoA ligase beta subunit family. As to quaternary structure, heterotetramer of two alpha and two beta subunits. Mg(2+) serves as cofactor.

The catalysed reaction is succinate + ATP + CoA = succinyl-CoA + ADP + phosphate. It catalyses the reaction GTP + succinate + CoA = succinyl-CoA + GDP + phosphate. It functions in the pathway carbohydrate metabolism; tricarboxylic acid cycle; succinate from succinyl-CoA (ligase route): step 1/1. Succinyl-CoA synthetase functions in the citric acid cycle (TCA), coupling the hydrolysis of succinyl-CoA to the synthesis of either ATP or GTP and thus represents the only step of substrate-level phosphorylation in the TCA. The beta subunit provides nucleotide specificity of the enzyme and binds the substrate succinate, while the binding sites for coenzyme A and phosphate are found in the alpha subunit. In Cronobacter sakazakii (strain ATCC BAA-894) (Enterobacter sakazakii), this protein is Succinate--CoA ligase [ADP-forming] subunit beta.